The following is a 349-amino-acid chain: tRNA N6-adenosine threonylcarbamoyltransferase (349 aa).

Positions 117, 121, and 138 each coordinate Fe cation. Substrate is bound by residues 138–142 (YVAGG), Asp170, Asp191, and Asn271. Asp299 is a Fe cation binding site.

Belongs to the KAE1 / TsaD family. Fe(2+) serves as cofactor.

It is found in the cytoplasm. It catalyses the reaction L-threonylcarbamoyladenylate + adenosine(37) in tRNA = N(6)-L-threonylcarbamoyladenosine(37) in tRNA + AMP + H(+). Functionally, required for the formation of a threonylcarbamoyl group on adenosine at position 37 (t(6)A37) in tRNAs that read codons beginning with adenine. Is probably involved in the transfer of the threonylcarbamoyl moiety of threonylcarbamoyl-AMP (TC-AMP) to the N6 group of A37. The polypeptide is tRNA N6-adenosine threonylcarbamoyltransferase (Aeropyrum pernix (strain ATCC 700893 / DSM 11879 / JCM 9820 / NBRC 100138 / K1)).